The following is a 218-amino-acid chain: MRVILLGAPGAGKGTQAQFITEEFGIPQISTGDMLRAAVKAGSEMGLKAKAVMDAGQLVSDDIIIGLVKERLTQDDCANGALFDGFPRTIPQADALKDAGVEIDYVVEIDVADEEIVKRMSGRRVHEASGRTYHLVYNPPKVEGKDDVTGEDLVQRADDTEETVRLRLGVYHDQTAPLIGYYQDWLKADSATAPKFVKVNGIGDLNEIKQSLLASLKA.

10-15 (GAGKGT) lines the ATP pocket. The tract at residues 30–59 (STGDMLRAAVKAGSEMGLKAKAVMDAGQLV) is NMP. AMP-binding positions include T31, R36, 57–59 (QLV), 85–88 (GFPR), and Q92. The interval 122 to 159 (GRRVHEASGRTYHLVYNPPKVEGKDDVTGEDLVQRADD) is LID. ATP contacts are provided by residues R123 and 132 to 133 (TY). AMP-binding residues include R156 and R167. G203 is an ATP binding site.

It belongs to the adenylate kinase family. As to quaternary structure, monomer.

It is found in the cytoplasm. It carries out the reaction AMP + ATP = 2 ADP. Its pathway is purine metabolism; AMP biosynthesis via salvage pathway; AMP from ADP: step 1/1. In terms of biological role, catalyzes the reversible transfer of the terminal phosphate group between ATP and AMP. Plays an important role in cellular energy homeostasis and in adenine nucleotide metabolism. The chain is Adenylate kinase from Marinomonas sp. (strain MWYL1).